The chain runs to 206 residues: Adenine phosphoribosyltransferase (206 aa).

It belongs to the purine/pyrimidine phosphoribosyltransferase family. As to quaternary structure, homodimer.

The protein localises to the cytoplasm. It carries out the reaction AMP + diphosphate = 5-phospho-alpha-D-ribose 1-diphosphate + adenine. The protein operates within purine metabolism; AMP biosynthesis via salvage pathway; AMP from adenine: step 1/1. Its function is as follows. Catalyzes a salvage reaction resulting in the formation of AMP, that is energically less costly than de novo synthesis. The sequence is that of Adenine phosphoribosyltransferase from Rhodopirellula baltica (strain DSM 10527 / NCIMB 13988 / SH1).